The chain runs to 130 residues: Small ribosomal subunit protein uS11c (130 aa).

It belongs to the universal ribosomal protein uS11 family. In terms of assembly, part of the 30S ribosomal subunit.

The protein resides in the plastid. Its subcellular location is the chloroplast. The polypeptide is Small ribosomal subunit protein uS11c (Chlorella vulgaris (Green alga)).